Here is a 314-residue protein sequence, read N- to C-terminus: MTEENQTVISQFLLLGLPIPSEHQHVFYALFLSMYLTTVLGNLIIIILIHLDSHLHTPMYLFLSNLSFSDLCFSSVTMPKLLQNMQSQVPSIPFAGCLTQLYFYLYFADLESFLLVAMAYDRYVAICFPLHYMSIMSPKLCVSLVVLSWVLTTFHAMLHTLLMARLSFCADNMIPHFFCDISPLLKLSCSDTHVNELVIFVMGGLVIVIPFVLIIVSYARVVASILKVPSVRGIHKIFSTCGSHLSVVSLFYGTIIGLYLCPSANNSTVKETVMAMMYTVVTPMLNPFIYSLRNRDMKEALIRVLCKKKITFCL.

Residues 1-25 (MTEENQTVISQFLLLGLPIPSEHQH) are Extracellular-facing. A glycan (N-linked (GlcNAc...) asparagine) is linked at Asn5. The helical transmembrane segment at 26–49 (VFYALFLSMYLTTVLGNLIIIILI) threads the bilayer. At 50 to 57 (HLDSHLHT) the chain is on the cytoplasmic side. A helical membrane pass occupies residues 58 to 79 (PMYLFLSNLSFSDLCFSSVTMP). At 80 to 100 (KLLQNMQSQVPSIPFAGCLTQ) the chain is on the extracellular side. A disulfide bridge connects residues Cys97 and Cys189. Residues 101–120 (LYFYLYFADLESFLLVAMAY) form a helical membrane-spanning segment. The Cytoplasmic segment spans residues 121–139 (DRYVAICFPLHYMSIMSPK). A helical membrane pass occupies residues 140–158 (LCVSLVVLSWVLTTFHAML). Residues 159-196 (HTLLMARLSFCADNMIPHFFCDISPLLKLSCSDTHVNE) lie on the Extracellular side of the membrane. A helical transmembrane segment spans residues 197–219 (LVIFVMGGLVIVIPFVLIIVSYA). Topologically, residues 220-236 (RVVASILKVPSVRGIHK) are cytoplasmic. Residues 237–260 (IFSTCGSHLSVVSLFYGTIIGLYL) traverse the membrane as a helical segment. Over 261–272 (CPSANNSTVKET) the chain is Extracellular. The helical transmembrane segment at 273–292 (VMAMMYTVVTPMLNPFIYSL) threads the bilayer. Topologically, residues 293–314 (RNRDMKEALIRVLCKKKITFCL) are cytoplasmic.

Belongs to the G-protein coupled receptor 1 family. Olfactory epithelium.

The protein localises to the cell membrane. Odorant receptor. This is Olfactory receptor 1468 (Olr1468) from Rattus norvegicus (Rat).